The sequence spans 557 residues: Alpha-glucosidase (557 aa).

Aspartate 201 serves as the catalytic Nucleophile. Glutamate 256 acts as the Proton donor in catalysis.

It belongs to the glycosyl hydrolase 13 family.

The catalysed reaction is Hydrolysis of terminal, non-reducing (1-&gt;4)-linked alpha-D-glucose residues with release of alpha-D-glucose.. This is Alpha-glucosidase (agl) from Pediococcus pentosaceus.